Reading from the N-terminus, the 96-residue chain is Fruit-specific protein (96 aa).

3 disulfides stabilise this stretch: Cys59–Cys75, Cys63–Cys78, and Cys69–Cys92.

Fruit specific.

The sequence is that of Fruit-specific protein (2A11) from Solanum lycopersicum (Tomato).